The chain runs to 144 residues: Large ribosomal subunit protein uL13 (144 aa).

Belongs to the universal ribosomal protein uL13 family. As to quaternary structure, part of the 50S ribosomal subunit.

Its function is as follows. This protein is one of the early assembly proteins of the 50S ribosomal subunit, although it is not seen to bind rRNA by itself. It is important during the early stages of 50S assembly. This is Large ribosomal subunit protein uL13 from Clostridium tetani (strain Massachusetts / E88).